Here is a 284-residue protein sequence, read N- to C-terminus: MNTPPETRPDRPIRSQYEDFMRHVDAHGVFKADRTGTGTKSVFGYQMRFDLNEGFPLVTTKKVHLKSIVQELLWFLTGSSDNNWLKERGVTIWDEWAREDGDLGPVYGVQWRSWPTPDGGHIDQISEVIKTLKTNPDSRRIIVSAWNVADLSKMALMPCHAFFQFYVAPATEAGGKGKLSCQLYQRSADIFLGVPFNIGSYALLTHMVAQQCDLDVGDFIWTGGDCHIYSNHAEQVALQLSRAPFPYPTLHIKRKPESIFDYQFDDFEFLDYQHHAAIKAPVAV.

Position 34 (Arg34) interacts with dUMP. His64 serves as a coordination point for (6R)-5,10-methylene-5,6,7,8-tetrahydrofolate. 139–140 (RR) is a dUMP binding site. Cys159 serves as the catalytic Nucleophile. Residues 186–189 (RSAD), Asn197, and 227–229 (HIY) each bind dUMP. A (6R)-5,10-methylene-5,6,7,8-tetrahydrofolate-binding site is contributed by Asp189. Ala283 is a binding site for (6R)-5,10-methylene-5,6,7,8-tetrahydrofolate.

This sequence belongs to the thymidylate synthase family. Bacterial-type ThyA subfamily. Homodimer.

It localises to the cytoplasm. It catalyses the reaction dUMP + (6R)-5,10-methylene-5,6,7,8-tetrahydrofolate = 7,8-dihydrofolate + dTMP. The protein operates within pyrimidine metabolism; dTTP biosynthesis. Functionally, catalyzes the reductive methylation of 2'-deoxyuridine-5'-monophosphate (dUMP) to 2'-deoxythymidine-5'-monophosphate (dTMP) while utilizing 5,10-methylenetetrahydrofolate (mTHF) as the methyl donor and reductant in the reaction, yielding dihydrofolate (DHF) as a by-product. This enzymatic reaction provides an intracellular de novo source of dTMP, an essential precursor for DNA biosynthesis. The polypeptide is Thymidylate synthase (Polaromonas sp. (strain JS666 / ATCC BAA-500)).